The following is a 319-amino-acid chain: Annexin A4 (319 aa).

An N-acetylalanine modification is found at alanine 2. Threonine 7 carries the phosphothreonine modification. Serine 12 is modified (phosphoserine). Annexin repeat units lie at residues 14 to 85 (FNAM…GMMT), 86 to 157 (PTVL…SLSA), 169 to 241 (ALVR…AIVK), and 245 to 316 (NKSA…VLCG). Residues lysine 213, lysine 293, and lysine 300 each carry the N6-acetyllysine modification.

Belongs to the annexin family.

The protein resides in the zymogen granule membrane. Calcium/phospholipid-binding protein which promotes membrane fusion and is involved in exocytosis. The protein is Annexin A4 of Homo sapiens (Human).